Reading from the N-terminus, the 507-residue chain is FSD1-like protein (507 aa).

A coiled-coil region spans residues 70-109 (KQEQVRKSQELQSQLSQCNNALENSEELLEFATRSLDIKE). Residues 105–162 (LDIKEPEEFSKAARQIKDRVTMASAFRLSLKPKVSDNMTHLMVDFSQERQMLQTLKFL) form the COS domain. Residues 164–268 (VPKAPEIDPV…DPVTLETRAL (105 aa)) enclose the Fibronectin type-III domain. In terms of domain architecture, B30.2/SPRY spans 291 to 484 (DPTGGKGQES…LSTGMQVPSA (194 aa)). The interval 292 to 345 (PTGGKGQESKIKGKENKGSVHVTSLKKHTSGTPSPKRTSVGSRPPAVRGSRDRF) is disordered. The segment covering 298–309 (QESKIKGKENKG) has biased composition (basic and acidic residues). The span at 321 to 332 (SGTPSPKRTSVG) shows a compositional bias: polar residues. Phosphoserine occurs at positions 498 and 501.

The sequence is that of FSD1-like protein (Fsd1l) from Mus musculus (Mouse).